A 104-amino-acid polypeptide reads, in one-letter code: Histone H4 (104 aa).

The segment at 1-21 (MAGRGKVGKGYGKVGAKRHTK) is disordered.

This sequence belongs to the histone H4 family. As to quaternary structure, the nucleosome is a histone octamer containing two molecules each of H2A, H2B, H3 and H4 assembled in one H3-H4 heterotetramer and two H2A-H2B heterodimers. The octamer wraps approximately 147 bp of DNA.

It is found in the nucleus. It localises to the chromosome. In terms of biological role, core component of nucleosome. Nucleosomes wrap and compact DNA into chromatin, limiting DNA accessibility to the cellular machineries which require DNA as a template. Histones thereby play a central role in transcription regulation, DNA repair, DNA replication and chromosomal stability. DNA accessibility is regulated via a complex set of post-translational modifications of histones, also called histone code, and nucleosome remodeling. This chain is Histone H4, found in Sterkiella nova (Ciliate).